A 548-amino-acid chain; its full sequence is Chaperonin GroEL (548 aa).

ATP contacts are provided by residues Thr-30–Pro-33, Lys-51, Asp-87–Thr-91, Gly-415, Asn-479–Ala-481, and Asp-495. Positions Pro-525–Met-548 are disordered. Residues Gly-539–Met-548 show a composition bias toward gly residues.

Belongs to the chaperonin (HSP60) family. In terms of assembly, forms a cylinder of 14 subunits composed of two heptameric rings stacked back-to-back. Interacts with the co-chaperonin GroES.

It localises to the cytoplasm. It catalyses the reaction ATP + H2O + a folded polypeptide = ADP + phosphate + an unfolded polypeptide.. Its function is as follows. Together with its co-chaperonin GroES, plays an essential role in assisting protein folding. The GroEL-GroES system forms a nano-cage that allows encapsulation of the non-native substrate proteins and provides a physical environment optimized to promote and accelerate protein folding. This is Chaperonin GroEL from Buchnera aphidicola subsp. Rhopalosiphum padi.